We begin with the raw amino-acid sequence, 1067 residues long: Probable importin-5 homolog (1067 aa).

HEAT repeat units lie at residues 3–34 (LQPI…YKNH), 42–75 (SFIV…SGNI), 93–120 (FAVR…QLVP), 125–152 (PEIL…LIGA), 164–197 (APHF…STFI), 206–243 (VFKP…IAQY), 251–286 (NFDM…FAEF), 295–347 (LYLE…HCVS), 349–381 (GLWE…SSIS), 385–425 (EKQI…ASYL), 427–466 (REMQ…LDEI), 468–508 (PNRV…VDGI), 510–553 (EEFT…GLAV), 555–596 (KKVF…AQCL), 598–658 (EDFI…AMEL), 661–703 (HLFP…SKQH), 718–757 (FTSR…MDIG), 763–826 (ADRI…CIQF), 832–869 (PYIA…ENGG), 876–909 (YPHI…AAEN), 917–960 (FLME…ITNL), 969–999 (PQTI…TLIR), 1008–1040 (QQYI…LALR), and 1041–1064 (SQES…LANF).

This sequence belongs to the importin beta family. Importin beta-3 subfamily.

The protein resides in the cytoplasm. It localises to the nucleus. Functionally, functions in nuclear protein import as nuclear transport receptor. Serves as receptor for nuclear localization signals (NLS) in cargo substrates. This chain is Probable importin-5 homolog, found in Dictyostelium discoideum (Social amoeba).